The primary structure comprises 86 residues: UPF0297 protein SH1302 (86 aa).

This sequence belongs to the UPF0297 family.

The chain is UPF0297 protein SH1302 from Staphylococcus haemolyticus (strain JCSC1435).